Reading from the N-terminus, the 195-residue chain is Cytochrome c oxidase assembly protein CtaG (195 aa).

Residues 1–9 are Cytoplasmic-facing; that stretch reads MALNGPQKT. The chain crosses the membrane as a helical; Signal-anchor for type II membrane protein span at residues 10–30; sequence VVQLVGVVVLMGGLAWASVPF. Residues 31 to 195 lie on the Periplasmic side of the membrane; that stretch reads YDWFCRVTGF…DTSGAETELN (165 aa).

Belongs to the COX11/CtaG family.

It localises to the cell inner membrane. Functionally, exerts its effect at some terminal stage of cytochrome c oxidase synthesis, probably by being involved in the insertion of the copper B into subunit I. The protein is Cytochrome c oxidase assembly protein CtaG of Ruegeria sp. (strain TM1040) (Silicibacter sp.).